The primary structure comprises 313 residues: Methionyl-tRNA formyltransferase (313 aa).

113–116 (SLLP) lines the (6S)-5,6,7,8-tetrahydrofolate pocket.

This sequence belongs to the Fmt family.

It carries out the reaction L-methionyl-tRNA(fMet) + (6R)-10-formyltetrahydrofolate = N-formyl-L-methionyl-tRNA(fMet) + (6S)-5,6,7,8-tetrahydrofolate + H(+). In terms of biological role, attaches a formyl group to the free amino group of methionyl-tRNA(fMet). The formyl group appears to play a dual role in the initiator identity of N-formylmethionyl-tRNA by promoting its recognition by IF2 and preventing the misappropriation of this tRNA by the elongation apparatus. This Francisella tularensis subsp. mediasiatica (strain FSC147) protein is Methionyl-tRNA formyltransferase.